The chain runs to 196 residues: Dehydrogenase RED3 (196 aa).

Residues Ser-47, Asp-74, Asn-101, Arg-134, Tyr-166, and Lys-170 each contribute to the NADP(+) site. The active-site Proton acceptor is the Tyr-166. The active-site Lowers pKa of active site Tyr is the Lys-170.

The protein belongs to the short-chain dehydrogenases/reductases (SDR) family.

The catalysed reaction is a primary alcohol + NAD(+) = an aldehyde + NADH + H(+). It catalyses the reaction a secondary alcohol + NAD(+) = a ketone + NADH + H(+). The protein operates within mycotoxin biosynthesis. Functionally, dehydrogenase; part of the Tox1B locus, one of the 2 loci that mediate the biosynthesis of T-toxin, a family of linear polyketides 37 to 45 carbons in length, of which the major component is 41 carbons, and which leads to high virulence to maize. One of the PKSs (PKS1 or PKS2) could synthesize a precursor, used subsequently by the other PKS as starter unit, to add additional carbons. Variability in the length of the final carbon backbone C35-47 could be achieved by varying the number of condensation cycles, or use of different starter or extender units or might be due to decarboxylation of the penultimate product, catalyzed by DEC1. Additional proteins are required for the biosynthesis of T-toxin, including oxidoreductases RED1, RED2, RED3, LAM1 and OXI1, as well as esterase TOX9. The polypeptide is Dehydrogenase RED3 (Cochliobolus heterostrophus (strain C4 / ATCC 48331 / race T) (Southern corn leaf blight fungus)).